Reading from the N-terminus, the 227-residue chain is Phosphoribosylformylglycinamidine synthase subunit PurQ (227 aa).

A Glutamine amidotransferase type-1 domain is found at 3-225 (FAVIVFPGSN…LKQWRETYVV (223 aa)). Catalysis depends on cysteine 86, which acts as the Nucleophile. Catalysis depends on residues histidine 194 and glutamate 196.

In terms of assembly, part of the FGAM synthase complex composed of 1 PurL, 1 PurQ and 2 PurS subunits.

It is found in the cytoplasm. The catalysed reaction is N(2)-formyl-N(1)-(5-phospho-beta-D-ribosyl)glycinamide + L-glutamine + ATP + H2O = 2-formamido-N(1)-(5-O-phospho-beta-D-ribosyl)acetamidine + L-glutamate + ADP + phosphate + H(+). It carries out the reaction L-glutamine + H2O = L-glutamate + NH4(+). It participates in purine metabolism; IMP biosynthesis via de novo pathway; 5-amino-1-(5-phospho-D-ribosyl)imidazole from N(2)-formyl-N(1)-(5-phospho-D-ribosyl)glycinamide: step 1/2. Functionally, part of the phosphoribosylformylglycinamidine synthase complex involved in the purines biosynthetic pathway. Catalyzes the ATP-dependent conversion of formylglycinamide ribonucleotide (FGAR) and glutamine to yield formylglycinamidine ribonucleotide (FGAM) and glutamate. The FGAM synthase complex is composed of three subunits. PurQ produces an ammonia molecule by converting glutamine to glutamate. PurL transfers the ammonia molecule to FGAR to form FGAM in an ATP-dependent manner. PurS interacts with PurQ and PurL and is thought to assist in the transfer of the ammonia molecule from PurQ to PurL. This Bacillus mycoides (strain KBAB4) (Bacillus weihenstephanensis) protein is Phosphoribosylformylglycinamidine synthase subunit PurQ.